A 385-amino-acid chain; its full sequence is Podocin (385 aa).

The segment covering 1-27 has biased composition (basic and acidic residues); that stretch reads MDSRARSSSREAHGRSSRSSSRDDKKA. A disordered region spans residues 1–64; sequence MDSRARSSSR…GEPRAPAATA (64 aa). The Cytoplasmic segment spans residues 1 to 104; sequence MDSRARSSSR…IKPSGLGACE (104 aa). A lipid anchor (S-palmitoyl cysteine) is attached at C103. The chain crosses the membrane as a helical span at residues 105–125; that stretch reads WLLVLASLIFIIMTFPFSIWF. Over 126–385 the chain is Extracellular; it reads CIKVVQEYER…NPKKKDSPML (260 aa). Residues 357-370 are compositionally biased toward polar residues; sequence NRAQGSINYPSSSK. Residues 357–385 are disordered; that stretch reads NRAQGSINYPSSSKPVEPLNPKKKDSPML. A compositionally biased stretch (basic and acidic residues) spans 376–385; it reads NPKKKDSPML.

It belongs to the band 7/mec-2 family. As to quaternary structure, interacts with nephrin/NPHS1, KIRRL1 and CD2AP. Interacts with DDN.

Its subcellular location is the membrane. Plays a role in the regulation of glomerular permeability, acting probably as a linker between the plasma membrane and the cytoskeleton. In Mus musculus (Mouse), this protein is Podocin (Nphs2).